A 190-amino-acid polypeptide reads, in one-letter code: Elongation factor P-like protein (190 aa).

This sequence belongs to the elongation factor P family.

The sequence is that of Elongation factor P-like protein from Shigella boydii serotype 4 (strain Sb227).